A 360-amino-acid polypeptide reads, in one-letter code: Histidinol-phosphate aminotransferase (360 aa).

N6-(pyridoxal phosphate)lysine is present on Lys223.

It belongs to the class-II pyridoxal-phosphate-dependent aminotransferase family. Histidinol-phosphate aminotransferase subfamily. In terms of assembly, homodimer. It depends on pyridoxal 5'-phosphate as a cofactor.

It carries out the reaction L-histidinol phosphate + 2-oxoglutarate = 3-(imidazol-4-yl)-2-oxopropyl phosphate + L-glutamate. It participates in amino-acid biosynthesis; L-histidine biosynthesis; L-histidine from 5-phospho-alpha-D-ribose 1-diphosphate: step 7/9. This Bacillus velezensis (strain DSM 23117 / BGSC 10A6 / LMG 26770 / FZB42) (Bacillus amyloliquefaciens subsp. plantarum) protein is Histidinol-phosphate aminotransferase.